We begin with the raw amino-acid sequence, 244 residues long: tRNA pseudouridine synthase A (244 aa).

Residue Asp52 is the Nucleophile of the active site. A substrate-binding site is contributed by Tyr110.

It belongs to the tRNA pseudouridine synthase TruA family. Homodimer.

It carries out the reaction uridine(38/39/40) in tRNA = pseudouridine(38/39/40) in tRNA. Formation of pseudouridine at positions 38, 39 and 40 in the anticodon stem and loop of transfer RNAs. In Pelobacter propionicus (strain DSM 2379 / NBRC 103807 / OttBd1), this protein is tRNA pseudouridine synthase A.